Here is a 351-residue protein sequence, read N- to C-terminus: Ion-translocating oxidoreductase complex subunit D (351 aa).

4 helical membrane-spanning segments follow: residues 20–40 (IMLL…YFFG), 44–64 (LIQV…TLSL), 89–109 (LPPL…IIIA), and 123–143 (PAMI…TSWL). Threonine 187 bears the FMN phosphoryl threonine mark. 5 consecutive transmembrane segments (helical) span residues 215–235 (LSGI…LFLL), 244–264 (IPVS…VIAP), 267–287 (FAPP…FFIA), 301–321 (LIFG…GGYP), and 322–342 (DGVA…DYYT).

The protein belongs to the NqrB/RnfD family. The complex is composed of six subunits: RnfA, RnfB, RnfC, RnfD, RnfE and RnfG. FMN serves as cofactor.

It is found in the cell inner membrane. Part of a membrane-bound complex that couples electron transfer with translocation of ions across the membrane. This Pectobacterium carotovorum subsp. carotovorum (strain PC1) protein is Ion-translocating oxidoreductase complex subunit D.